The sequence spans 187 residues: Superoxide dismutase [Cu-Zn] (187 aa).

Residues 1–23 (MMKMKTLLALAISGICAAGVANA) form the signal peptide. The Cu cation site is built by His80, His82, and His105. The cysteines at positions 87 and 183 are disulfide-linked. Zn(2+)-binding residues include His105, His114, His123, and Asp126. His161 contributes to the Cu cation binding site.

It belongs to the Cu-Zn superoxide dismutase family. Homodimer. The cofactor is Cu cation. Zn(2+) is required as a cofactor.

It is found in the periplasm. It carries out the reaction 2 superoxide + 2 H(+) = H2O2 + O2. Its function is as follows. Destroys radicals which are normally produced within the cells and which are toxic to biological systems. In terms of biological role, may confer survival advantage by accelerating dismutation of superoxide of environmental origin to hydrogen peroxide, disruptive to the normal mucociliary clearance process in the host. In Haemophilus parainfluenzae, this protein is Superoxide dismutase [Cu-Zn] (sodC).